The following is a 492-amino-acid chain: Anthranilate synthase component 1 (492 aa).

L-tryptophan is bound by residues Ser-48 and 273–275 (PYM). Residue 308-309 (GT) coordinates chorismate. Residue Glu-335 coordinates Mg(2+). Residues Tyr-423, Arg-443, 457 to 459 (GGG), and Gly-459 each bind chorismate. Glu-472 is a Mg(2+) binding site.

This sequence belongs to the anthranilate synthase component I family. As to quaternary structure, heterotetramer consisting of two non-identical subunits: a beta subunit (TrpG) and a large alpha subunit (TrpE). The cofactor is Mg(2+).

The enzyme catalyses chorismate + L-glutamine = anthranilate + pyruvate + L-glutamate + H(+). It participates in amino-acid biosynthesis; L-tryptophan biosynthesis; L-tryptophan from chorismate: step 1/5. Feedback inhibited by tryptophan. Part of a heterotetrameric complex that catalyzes the two-step biosynthesis of anthranilate, an intermediate in the biosynthesis of L-tryptophan. In the first step, the glutamine-binding beta subunit (TrpG) of anthranilate synthase (AS) provides the glutamine amidotransferase activity which generates ammonia as a substrate that, along with chorismate, is used in the second step, catalyzed by the large alpha subunit of AS (TrpE) to produce anthranilate. In the absence of TrpG, TrpE can synthesize anthranilate directly from chorismate and high concentrations of ammonia. In Pseudomonas aeruginosa (strain ATCC 15692 / DSM 22644 / CIP 104116 / JCM 14847 / LMG 12228 / 1C / PRS 101 / PAO1), this protein is Anthranilate synthase component 1.